Reading from the N-terminus, the 202-residue chain is Glycerol-3-phosphate acyltransferase 1 (202 aa).

5 consecutive transmembrane segments (helical) span residues 8–28, 85–105, 122–142, 146–166, and 173–190; these read AGMIDLFMILGAYLLGGMSTG, LSLTTLILCLIAGVAGHIWPL, ILVVDPMLASAAAGVFLFVLA, QFTLSGLAAILGAPILSLIMA, and AGLAVLAIFILLAHRKNI.

The protein belongs to the PlsY family. As to quaternary structure, probably interacts with PlsX.

The protein localises to the cell membrane. It catalyses the reaction an acyl phosphate + sn-glycerol 3-phosphate = a 1-acyl-sn-glycero-3-phosphate + phosphate. It participates in lipid metabolism; phospholipid metabolism. Catalyzes the transfer of an acyl group from acyl-phosphate (acyl-PO(4)) to glycerol-3-phosphate (G3P) to form lysophosphatidic acid (LPA). This enzyme utilizes acyl-phosphate as fatty acyl donor, but not acyl-CoA or acyl-ACP. The chain is Glycerol-3-phosphate acyltransferase 1 from Desulfitobacterium hafniense (strain Y51).